The primary structure comprises 184 residues: NADH-quinone oxidoreductase subunit B (184 aa).

Cysteine 63, cysteine 64, cysteine 128, and cysteine 158 together coordinate [4Fe-4S] cluster.

It belongs to the complex I 20 kDa subunit family. In terms of assembly, NDH-1 is composed of 14 different subunits. Subunits NuoB, C, D, E, F, and G constitute the peripheral sector of the complex. Requires [4Fe-4S] cluster as cofactor.

The protein localises to the cell inner membrane. It carries out the reaction a quinone + NADH + 5 H(+)(in) = a quinol + NAD(+) + 4 H(+)(out). Functionally, NDH-1 shuttles electrons from NADH, via FMN and iron-sulfur (Fe-S) centers, to quinones in the respiratory chain. The immediate electron acceptor for the enzyme in this species is believed to be ubiquinone. Couples the redox reaction to proton translocation (for every two electrons transferred, four hydrogen ions are translocated across the cytoplasmic membrane), and thus conserves the redox energy in a proton gradient. This chain is NADH-quinone oxidoreductase subunit B, found in Xanthomonas axonopodis pv. citri (strain 306).